A 202-amino-acid polypeptide reads, in one-letter code: ATP-dependent Clp protease proteolytic subunit (202 aa).

Serine 106 (nucleophile) is an active-site residue. The active site involves histidine 131.

Belongs to the peptidase S14 family. Fourteen ClpP subunits assemble into 2 heptameric rings which stack back to back to give a disk-like structure with a central cavity, resembling the structure of eukaryotic proteasomes.

Its subcellular location is the cytoplasm. The enzyme catalyses Hydrolysis of proteins to small peptides in the presence of ATP and magnesium. alpha-casein is the usual test substrate. In the absence of ATP, only oligopeptides shorter than five residues are hydrolyzed (such as succinyl-Leu-Tyr-|-NHMec, and Leu-Tyr-Leu-|-Tyr-Trp, in which cleavage of the -Tyr-|-Leu- and -Tyr-|-Trp bonds also occurs).. In terms of biological role, cleaves peptides in various proteins in a process that requires ATP hydrolysis. Has a chymotrypsin-like activity. Plays a major role in the degradation of misfolded proteins. The protein is ATP-dependent Clp protease proteolytic subunit of Shewanella sp. (strain ANA-3).